Consider the following 276-residue polypeptide: NAD kinase (276 aa).

Catalysis depends on D61, which acts as the Proton acceptor. NAD(+)-binding positions include 61–62 (DG), R66, 135–136 (NE), R146, H163, D165, and A200.

This sequence belongs to the NAD kinase family. Requires a divalent metal cation as cofactor.

It is found in the cytoplasm. The enzyme catalyses NAD(+) + ATP = ADP + NADP(+) + H(+). In terms of biological role, involved in the regulation of the intracellular balance of NAD and NADP, and is a key enzyme in the biosynthesis of NADP. Catalyzes specifically the phosphorylation on 2'-hydroxyl of the adenosine moiety of NAD to yield NADP. This is NAD kinase from Chloroflexus aggregans (strain MD-66 / DSM 9485).